Consider the following 241-residue polypeptide: MNMDQLKRQAAARALEEVRDGMQLGLGTGSTAKHFVELLGERVAAGLKVIGVPTSEATRLDATRCGVPLTTLDEIDHLDITVDGADEIDPELNLIKGGGGALLREKIVAAASDRMIVIADDTKWVPTLGRFPLPIEVIPFGLGATRRAIETAFAQCGVSGQMAVRKAKGGDKDGHVFVTDGGHWILDAQLGRIVDPPSLAKALSAIPGVVEHGLFIGLASSAVLAGGEGIRVIERRKPKGD.

Substrate contacts are provided by residues Thr-28–Thr-31, Asp-83–Asp-86, and Lys-96–Gly-99. The active-site Proton acceptor is the Glu-105. Lys-123 is a binding site for substrate.

Belongs to the ribose 5-phosphate isomerase family. Homodimer.

The enzyme catalyses aldehydo-D-ribose 5-phosphate = D-ribulose 5-phosphate. It participates in carbohydrate degradation; pentose phosphate pathway; D-ribose 5-phosphate from D-ribulose 5-phosphate (non-oxidative stage): step 1/1. Catalyzes the reversible conversion of ribose-5-phosphate to ribulose 5-phosphate. This chain is Ribose-5-phosphate isomerase A, found in Bradyrhizobium diazoefficiens (strain JCM 10833 / BCRC 13528 / IAM 13628 / NBRC 14792 / USDA 110).